The sequence spans 240 residues: Methylthioribulose-1-phosphate dehydratase (240 aa).

Cysteine 100 provides a ligand contact to substrate. Zn(2+) is bound by residues histidine 117 and histidine 119. The Proton donor/acceptor role is filled by glutamate 146. Position 202 (histidine 202) interacts with Zn(2+).

It belongs to the aldolase class II family. MtnB subfamily. It depends on Zn(2+) as a cofactor.

Its subcellular location is the cytoplasm. The enzyme catalyses 5-(methylsulfanyl)-D-ribulose 1-phosphate = 5-methylsulfanyl-2,3-dioxopentyl phosphate + H2O. It functions in the pathway amino-acid biosynthesis; L-methionine biosynthesis via salvage pathway; L-methionine from S-methyl-5-thio-alpha-D-ribose 1-phosphate: step 2/6. In terms of biological role, catalyzes the dehydration of methylthioribulose-1-phosphate (MTRu-1-P) into 2,3-diketo-5-methylthiopentyl-1-phosphate (DK-MTP-1-P). The chain is Methylthioribulose-1-phosphate dehydratase from Emericella nidulans (strain FGSC A4 / ATCC 38163 / CBS 112.46 / NRRL 194 / M139) (Aspergillus nidulans).